We begin with the raw amino-acid sequence, 203 residues long: E3 ubiquitin-protein ligase rnf152-B (203 aa).

The RING-type zinc finger occupies 12 to 55; sequence CQICFNYYSPRRRPKLLDCKHTCCSVCLQQMRASQKDLRCPWCR. The helical transmembrane segment at 167–187 threads the bilayer; it reads SGVCTVILVACVLVFLLGIVL.

The protein belongs to the RNF152 family.

The protein resides in the lysosome membrane. It carries out the reaction S-ubiquitinyl-[E2 ubiquitin-conjugating enzyme]-L-cysteine + [acceptor protein]-L-lysine = [E2 ubiquitin-conjugating enzyme]-L-cysteine + N(6)-ubiquitinyl-[acceptor protein]-L-lysine.. It functions in the pathway protein modification; protein ubiquitination. Functionally, E3 ubiquitin-protein ligase that acts as a negative regulator of mTORC1 signaling by mediating ubiquitination of RagA/RRAGA and RHEB. Catalyzes 'Lys-63'-linked polyubiquitination of RagA/RRAGA in response to amino acid starvation, thereby regulating mTORC1 signaling. Also mediates monoubiquitination of RHEB, promoting its association with the TSC-TBC complex and subsequent inhibition. Also mediates 'Lys-48'-linked polyubiquitination of target proteins and their subsequent targeting to the proteasome for degradation. This chain is E3 ubiquitin-protein ligase rnf152-B, found in Xenopus laevis (African clawed frog).